The primary structure comprises 243 residues: Probable phosphatase CBO3379/CLC_3322 (243 aa).

Residues His8, His10, His16, His41, Glu74, His102, His132, Asp192, and His194 each coordinate Zn(2+).

The protein belongs to the PHP family. Zn(2+) is required as a cofactor.

This chain is Probable phosphatase CBO3379/CLC_3322, found in Clostridium botulinum (strain Hall / ATCC 3502 / NCTC 13319 / Type A).